The sequence spans 228 residues: Urease accessory protein UreF (228 aa).

It belongs to the UreF family. As to quaternary structure, ureD, UreF and UreG form a complex that acts as a GTP-hydrolysis-dependent molecular chaperone, activating the urease apoprotein by helping to assemble the nickel containing metallocenter of UreC. The UreE protein probably delivers the nickel.

The protein localises to the cytoplasm. Functionally, required for maturation of urease via the functional incorporation of the urease nickel metallocenter. The protein is Urease accessory protein UreF of Prochlorococcus marinus (strain MIT 9312).